The chain runs to 224 residues: UPF0758 protein VS_0182 (224 aa).

The tract at residues 1 to 21 (MPISKMPVESMPREKLLSRGP) is disordered. Residues 102–224 (ALTSPSHTKL…VISFAERGWI (123 aa)) form the MPN domain. The Zn(2+) site is built by H173, H175, and D186. The JAMM motif signature appears at 173–186 (HNHPSGVAEPSQAD).

Belongs to the UPF0758 family.

This chain is UPF0758 protein VS_0182, found in Vibrio atlanticus (strain LGP32) (Vibrio splendidus (strain Mel32)).